The primary structure comprises 22 residues: Thylakoid lumenal 11 kDa protein (22 aa).

The disordered stretch occupies residues 1-22 (FKGGGPYGQGVTRGQDLSGKDF).

The protein to A.thaliana At2g44920.

It localises to the plastid. The protein localises to the chloroplast thylakoid lumen. The chain is Thylakoid lumenal 11 kDa protein from Spinacia oleracea (Spinach).